Reading from the N-terminus, the 285-residue chain is Sulfotransferase 2A6 (285 aa).

Residue 44–49 (KSGTNW) participates in 3'-phosphoadenylyl sulfate binding. His-99 (proton acceptor) is an active-site residue. 3'-phosphoadenylyl sulfate contacts are provided by residues Arg-121, Ser-129, Tyr-184, 218–223 (SSFQAM), and 247–249 (RKG).

Belongs to the sulfotransferase 1 family. As to quaternary structure, oligomer.

It is found in the cytoplasm. The protein resides in the cytosol. The enzyme catalyses an alcohol + 3'-phosphoadenylyl sulfate = an alkyl sulfate + adenosine 3',5'-bisphosphate + H(+). It carries out the reaction glycolithocholate + 3'-phosphoadenylyl sulfate = sulfoglycolithocholate + adenosine 3',5'-bisphosphate + H(+). The catalysed reaction is taurolithocholate + 3'-phosphoadenylyl sulfate = taurolithocholate 3-sulfate + adenosine 3',5'-bisphosphate + H(+). It catalyses the reaction 3beta-hydroxyandrost-5-en-17-one + 3'-phosphoadenylyl sulfate = dehydroepiandrosterone 3-sulfate + adenosine 3',5'-bisphosphate + H(+). In terms of biological role, sulfotransferase that utilizes 3'-phospho-5'-adenylyl sulfate (PAPS) as sulfonate donor to catalyze the sulfonation of the hydroxyl group of hydroxysteroids and bile acids. This Mus musculus (Mouse) protein is Sulfotransferase 2A6.